The sequence spans 437 residues: Adenylosuccinate synthetase 1 (437 aa).

Residues 13–19 and 41–43 each bind GTP; these read GDEGKGK and GHT. The active-site Proton acceptor is the Asp-14. Residues Asp-14 and Gly-41 each contribute to the Mg(2+) site. Residues 14–17, 39–42, Thr-130, Arg-144, Gln-225, Thr-240, and Arg-310 contribute to the IMP site; these read DEGK and NAGH. His-42 (proton donor) is an active-site residue. 306 to 312 lines the substrate pocket; sequence ATTGRLR. Residues Arg-312, 338 to 340, and 421 to 423 contribute to the GTP site; these read KLD and STG.

The protein belongs to the adenylosuccinate synthetase family. Homodimer. It depends on Mg(2+) as a cofactor.

Its subcellular location is the cytoplasm. The catalysed reaction is IMP + L-aspartate + GTP = N(6)-(1,2-dicarboxyethyl)-AMP + GDP + phosphate + 2 H(+). The protein operates within purine metabolism; AMP biosynthesis via de novo pathway; AMP from IMP: step 1/2. In terms of biological role, plays an important role in the de novo pathway of purine nucleotide biosynthesis. Catalyzes the first committed step in the biosynthesis of AMP from IMP. This is Adenylosuccinate synthetase 1 from Pseudoalteromonas translucida (strain TAC 125).